Here is a 714-residue protein sequence, read N- to C-terminus: Polyribonucleotide nucleotidyltransferase (714 aa).

Residues aspartate 489 and aspartate 495 each coordinate Mg(2+). One can recognise a KH domain in the interval 556–615 (PKIDTIKIDVDKIKVVIGKGGETIDKIIAETGVKIDIDEEGNVSIYSSDQDAINRAKEII). Residues 625 to 693 (GEVYHAKVVR…DKGRIDASMK (69 aa)) form the S1 motif domain. The disordered stretch occupies residues 691–714 (SMKALVPRPPKPEKSEAKKEGKHD). The segment covering 700-714 (PKPEKSEAKKEGKHD) has biased composition (basic and acidic residues).

Belongs to the polyribonucleotide nucleotidyltransferase family. Mg(2+) is required as a cofactor.

It is found in the cytoplasm. The catalysed reaction is RNA(n+1) + phosphate = RNA(n) + a ribonucleoside 5'-diphosphate. Its function is as follows. Involved in mRNA degradation. Catalyzes the phosphorolysis of single-stranded polyribonucleotides processively in the 3'- to 5'-direction. This is Polyribonucleotide nucleotidyltransferase from Streptococcus equi subsp. zooepidemicus (strain MGCS10565).